Consider the following 225-residue polypeptide: E3 ubiquitin-protein ligase ATL76 (225 aa).

A helical membrane pass occupies residues 59 to 79 (LMLLSVLICGIICCLGLHYII). Residues 135 to 177 (CVICLSDFVSGEQLRLLPKCNHGFHVRCIDKWLQHHLTCPKCR) form an RING-type; atypical zinc finger.

The protein belongs to the RING-type zinc finger family. ATL subfamily.

The protein localises to the membrane. The catalysed reaction is S-ubiquitinyl-[E2 ubiquitin-conjugating enzyme]-L-cysteine + [acceptor protein]-L-lysine = [E2 ubiquitin-conjugating enzyme]-L-cysteine + N(6)-ubiquitinyl-[acceptor protein]-L-lysine.. The protein operates within protein modification; protein ubiquitination. E3 ubiquitin-protein ligase able to catalyze polyubiquitination with ubiquitin-conjugating enzyme E2 UBC8 in vitro. The protein is E3 ubiquitin-protein ligase ATL76 (ATL76) of Arabidopsis thaliana (Mouse-ear cress).